We begin with the raw amino-acid sequence, 277 residues long: Putative phosphoenolpyruvate synthase regulatory protein (277 aa).

157 to 164 is an ADP binding site; sequence GVSRSGKT.

Belongs to the pyruvate, phosphate/water dikinase regulatory protein family. PSRP subfamily.

The enzyme catalyses [pyruvate, water dikinase] + ADP = [pyruvate, water dikinase]-phosphate + AMP + H(+). The catalysed reaction is [pyruvate, water dikinase]-phosphate + phosphate + H(+) = [pyruvate, water dikinase] + diphosphate. Bifunctional serine/threonine kinase and phosphorylase involved in the regulation of the phosphoenolpyruvate synthase (PEPS) by catalyzing its phosphorylation/dephosphorylation. This chain is Putative phosphoenolpyruvate synthase regulatory protein, found in Vibrio vulnificus (strain CMCP6).